The sequence spans 276 residues: Large ribosomal subunit protein uL2 (276 aa).

The segment at 212 to 276 (NRHRGIRPQT…KLIISRKKHK (65 aa)) is disordered. Over residues 257–276 (YKTRKKKASDKLIISRKKHK) the composition is skewed to basic residues.

This sequence belongs to the universal ribosomal protein uL2 family. As to quaternary structure, part of the 50S ribosomal subunit. Forms a bridge to the 30S subunit in the 70S ribosome.

In terms of biological role, one of the primary rRNA binding proteins. Required for association of the 30S and 50S subunits to form the 70S ribosome, for tRNA binding and peptide bond formation. It has been suggested to have peptidyltransferase activity; this is somewhat controversial. Makes several contacts with the 16S rRNA in the 70S ribosome. This Helicobacter acinonychis (strain Sheeba) protein is Large ribosomal subunit protein uL2.